The primary structure comprises 370 residues: tRNA-specific 2-thiouridylase MnmA (370 aa).

ATP-binding positions include 12–19 (GMSGGVDS) and Leu-38. The Nucleophile role is filled by Cys-105. The cysteines at positions 105 and 204 are disulfide-linked. An ATP-binding site is contributed by Gly-129. The interaction with tRNA stretch occupies residues 153 to 155 (KDQ). The Cysteine persulfide intermediate role is filled by Cys-204. Residues 310–311 (RY) form an interaction with tRNA region.

The protein belongs to the MnmA/TRMU family.

Its subcellular location is the cytoplasm. It catalyses the reaction S-sulfanyl-L-cysteinyl-[protein] + uridine(34) in tRNA + AH2 + ATP = 2-thiouridine(34) in tRNA + L-cysteinyl-[protein] + A + AMP + diphosphate + H(+). Catalyzes the 2-thiolation of uridine at the wobble position (U34) of tRNA, leading to the formation of s(2)U34. This is tRNA-specific 2-thiouridylase MnmA from Desulfitobacterium hafniense (strain Y51).